Consider the following 317-residue polypeptide: Putative peptide import ATP-binding protein BruAb2_0797 (317 aa).

The region spanning 7–250 is the ABC transporter domain; sequence LSVRGLAKHY…PQHPYTRALL (244 aa). 43–50 contributes to the ATP binding site; sequence GESGSGKT.

Belongs to the ABC transporter superfamily. As to quaternary structure, the complex is composed of two ATP-binding proteins (BruAb2_0796 and BruAb2_0797), two transmembrane proteins (BruAb2_0794) and a solute-binding protein (BruAb2_0792).

The protein localises to the cell inner membrane. In terms of biological role, probably part of an ABC transporter complex that could be involved in peptide import. Probably responsible for energy coupling to the transport system. The sequence is that of Putative peptide import ATP-binding protein BruAb2_0797 from Brucella abortus biovar 1 (strain 9-941).